The primary structure comprises 154 residues: uncharacterized protein (154 aa).

Functionally, this protein may be involved in virus assembly. Essential for virus function. This is an uncharacterized protein from Saccharolobus solfataricus (Sulfolobus solfataricus).